A 279-amino-acid polypeptide reads, in one-letter code: UTP--glucose-1-phosphate uridylyltransferase (279 aa).

The protein belongs to the UDPGP type 2 family.

The enzyme catalyses alpha-D-glucose 1-phosphate + UTP + H(+) = UDP-alpha-D-glucose + diphosphate. May play a role in stationary phase survival. In Pseudomonas aeruginosa (strain ATCC 15692 / DSM 22644 / CIP 104116 / JCM 14847 / LMG 12228 / 1C / PRS 101 / PAO1), this protein is UTP--glucose-1-phosphate uridylyltransferase (galU).